The sequence spans 338 residues: Fructose-1,6-bisphosphatase class 1 (338 aa).

Residues Glu-91, Asp-113, Leu-115, and Asp-116 each contribute to the Mg(2+) site. Substrate-binding positions include 116–119, Asn-208, and Lys-274; that span reads DGSS. Position 280 (Glu-280) interacts with Mg(2+).

It belongs to the FBPase class 1 family. As to quaternary structure, homotetramer. It depends on Mg(2+) as a cofactor.

The protein resides in the cytoplasm. The enzyme catalyses beta-D-fructose 1,6-bisphosphate + H2O = beta-D-fructose 6-phosphate + phosphate. Its pathway is carbohydrate biosynthesis; gluconeogenesis. This is Fructose-1,6-bisphosphatase class 1 from Ralstonia pickettii (strain 12J).